A 194-amino-acid polypeptide reads, in one-letter code: Imidazoleglycerol-phosphate dehydratase (194 aa).

Belongs to the imidazoleglycerol-phosphate dehydratase family.

It localises to the cytoplasm. The enzyme catalyses D-erythro-1-(imidazol-4-yl)glycerol 3-phosphate = 3-(imidazol-4-yl)-2-oxopropyl phosphate + H2O. It functions in the pathway amino-acid biosynthesis; L-histidine biosynthesis; L-histidine from 5-phospho-alpha-D-ribose 1-diphosphate: step 6/9. The sequence is that of Imidazoleglycerol-phosphate dehydratase from Listeria monocytogenes serotype 4b (strain F2365).